The sequence spans 458 residues: NADH-quinone oxidoreductase subunit N (458 aa).

Helical transmembrane passes span Leu-2 to Leu-22, Ile-30 to Ser-50, Ile-71 to Gly-91, Thr-93 to Ile-113, Phe-118 to Phe-138, Phe-153 to Phe-173, Leu-196 to Leu-216, Phe-235 to Ile-255, Ile-261 to Ala-281, Leu-290 to Asn-310, Leu-319 to Phe-339, Ile-361 to Phe-381, Phe-397 to Val-417, and Leu-438 to Phe-458.

It belongs to the complex I subunit 2 family. In terms of assembly, NDH-1 is composed of 14 different subunits. Subunits NuoA, H, J, K, L, M, N constitute the membrane sector of the complex.

The protein resides in the cell inner membrane. It carries out the reaction a quinone + NADH + 5 H(+)(in) = a quinol + NAD(+) + 4 H(+)(out). Functionally, NDH-1 shuttles electrons from NADH, via FMN and iron-sulfur (Fe-S) centers, to quinones in the respiratory chain. The immediate electron acceptor for the enzyme in this species is believed to be ubiquinone. Couples the redox reaction to proton translocation (for every two electrons transferred, four hydrogen ions are translocated across the cytoplasmic membrane), and thus conserves the redox energy in a proton gradient. The sequence is that of NADH-quinone oxidoreductase subunit N from Rickettsia prowazekii (strain Madrid E).